Reading from the N-terminus, the 284-residue chain is Para-Rep C3 (284 aa).

Residues 3–98 (TVQSTCWVFT…IEGPWEYGKY (96 aa)) form the CRESS-DNA virus Rep endonuclease domain. Positions 10 to 13 (VFTL) match the RCR-1 motif. Residues Glu-36 and His-42 each coordinate a divalent metal cation. The RCR-2 motif lies at 42 to 44 (HLQ). Residues 51 to 71 (AQQSLGQMKAIIPGAHFEKMR) carry the Nuclear localization signal motif. Tyr-81 (for DNA cleavage activity) is an active-site residue. An RCR-3 motif is present at residues 81–84 (YAMK). Asp-86 provides a ligand contact to a divalent metal cation. The Nuclear localization signal signature appears at 98–104 (YIKKGSH). 174–182 (GPKGGEGKS) contributes to the ATP binding site.

Belongs to the nanoviridea/circoviridae replication-associated protein family. Homooligomer (Potential). Rep binds to repeated DNA motifs (iterons). The cofactor is Mg(2+). Mn(2+) serves as cofactor.

The protein resides in the host nucleus. The catalysed reaction is ATP + H2O = ADP + phosphate + H(+). Initiates and terminates the replication only of its own subviral DNA molecule. The closed circular ssDNA genome is first converted to a superhelical dsDNA. Rep binds a specific hairpin at the genome origin of replication. Introduces an endonucleolytic nick within the intergenic region of the genome, thereby initiating the rolling circle replication (RCR). Following cleavage, binds covalently to the 5'-phosphate of DNA as a tyrosyl ester. The cleavage gives rise to a free 3'-OH that serves as a primer for the cellular DNA polymerase. The polymerase synthesizes the (+) strand DNA by rolling circle mechanism. After one round of replication, a Rep-catalyzed nucleotidyl transfer reaction releases a circular single-stranded virus genome, thereby terminating the replication. Displays origin-specific DNA cleavage, nucleotidyl transferase, ATPase and helicase activities. This is Para-Rep C3 (C3) from Milk vetch dwarf C3 alphasatellite (MVDC3A).